A 702-amino-acid chain; its full sequence is MSRTTPISRYRNIGISAHIDAGKTTTTERILFYTGINHKIGEVHDGAATMDWMEQEQERGITITSAATTTFWSGMAKQFKPHRINIIDTPGHVDFTIEVERSMRVLDGAVMVYCAVGGVQPQSETVWRQANKYNVPRIAFVNKMDRMGANFLKVVKQIKIRLGANPVPLQLAIGAEDTFVGVVDLIKMKAVHWKDSDQGVTFVYNDIPPEMIELSKKWNQNLIESAVESNEDLLEKYLNGDRLSESEIKSALRKRALNNEIVLITCGSAFKNKGVQALLDAIIEFLPAPNDIQDIKGILNDVEQTPAIRNSDDKAPFSALAFKIASDPFVGNLTFFRVYSGVVKSGDTVFNSAKSQRERFGRIVQMHANKREEIKEVYAGDIAAAIGLKDVTTGDTLCDLNDPIILERMEFPEPVISISVEPKTKVDQEKMGLALGRLAKEDPSFRVRTDQESNQTIISGMGELHLEIIIDRMKREFSVDANVGKPQVAYRETILNKVEDIEGKHIKQSGGRGQYGHVVIELFPLQPGGEGYLFVNDIKGGVIPSEYISAIDKGIQEQLKCGPLAGYPVVDIGVRLYFGSYHDVDSSELAFKLAASAAFKKGFKQAKPILLEPIMKVEVETPDDYMGDVIGDLNRRRGIIEGMKDLSISKIINACVPLSEMFGYATDLRSQTQGRASYSMEFLKYIEAPFNISKDIIERREK.

One can recognise a tr-type G domain in the interval 8–290 (SRYRNIGISA…AIIEFLPAPN (283 aa)). GTP contacts are provided by residues 17–24 (AHIDAGKT), 88–92 (DTPGH), and 142–145 (NKMD).

This sequence belongs to the TRAFAC class translation factor GTPase superfamily. Classic translation factor GTPase family. EF-G/EF-2 subfamily.

Its subcellular location is the cytoplasm. In terms of biological role, catalyzes the GTP-dependent ribosomal translocation step during translation elongation. During this step, the ribosome changes from the pre-translocational (PRE) to the post-translocational (POST) state as the newly formed A-site-bound peptidyl-tRNA and P-site-bound deacylated tRNA move to the P and E sites, respectively. Catalyzes the coordinated movement of the two tRNA molecules, the mRNA and conformational changes in the ribosome. The chain is Elongation factor G from Buchnera aphidicola subsp. Acyrthosiphon pisum (strain 5A).